The chain runs to 117 residues: Protein OPG035 (117 aa).

It belongs to the poxviridae OPG035 family.

In terms of biological role, bcl-2-like protein which contributes to virulence by preventing host NF-kappa-B activation in response to pro-inflammatory stimuli such as TNF-alpha or IL1B. This Bos taurus (Bovine) protein is Protein OPG035 (OPG035).